A 685-amino-acid polypeptide reads, in one-letter code: Protein hook (685 aa).

Residues methionine 6–alanine 122 enclose the Calponin-homology (CH) domain. Positions glutamine 134–lysine 570 form a coiled coil. 3 disordered regions span residues alanine 430 to valine 449, leucine 593 to valine 625, and proline 661 to lysine 685. Residues alanine 602–glycine 623 show a composition bias toward low complexity. The span at proline 661 to arginine 670 shows a compositional bias: polar residues.

This sequence belongs to the hook family. In terms of assembly, homodimer. Interacts with microtubules via its N-terminus.

The protein resides in the cytoplasm. It localises to the cytoskeleton. The protein localises to the endosome. In terms of biological role, involved in endocytic trafficking. Probably acts as a cytoskeletal linker protein that tethers endosome vesicles to the cytoskeleton. The chain is Protein hook from Aedes aegypti (Yellowfever mosquito).